The sequence spans 208 residues: 3-demethoxyubiquinol 3-hydroxylase (208 aa).

Residues E57, E87, H90, E139, E171, and H174 each coordinate Fe cation.

This sequence belongs to the COQ7 family. It depends on Fe cation as a cofactor.

The protein localises to the cell membrane. The catalysed reaction is a 5-methoxy-2-methyl-3-(all-trans-polyprenyl)benzene-1,4-diol + AH2 + O2 = a 3-demethylubiquinol + A + H2O. Its pathway is cofactor biosynthesis; ubiquinone biosynthesis. In terms of biological role, catalyzes the hydroxylation of 2-nonaprenyl-3-methyl-6-methoxy-1,4-benzoquinol during ubiquinone biosynthesis. This Burkholderia ambifaria (strain MC40-6) protein is 3-demethoxyubiquinol 3-hydroxylase.